The following is a 2210-amino-acid chain: RNA-directed RNA polymerase L (2210 aa).

Positions 26–284 are endonuclease; the sequence is RDIFLSQHHP…SHKDSDVPSC (259 aa). Residues glutamate 51, aspartate 89, and glutamate 102 each contribute to the Mn(2+) site. Lysine 115 is an active-site residue. The region spanning 1171–1368 is the RdRp catalytic domain; that stretch reads CDMKMAVNNG…FLSSKLNKFI (198 aa). Aspartate 1329 lines the Mg(2+) pocket.

It belongs to the Bunyavirales RNA polymerase family. In terms of assembly, homomultimer; the oligomeric structure is essential for the polymerase activity. Interacts with nucleoprotein N. Interacts with protein Z; this interaction inhibits viral transcription and replication, Z partially blocks the product exit tunnel for the releasing nascent RNA product. Requires Mn(2+) as cofactor. Mg(2+) serves as cofactor.

It is found in the virion. The protein localises to the host cytoplasm. It catalyses the reaction RNA(n) + a ribonucleoside 5'-triphosphate = RNA(n+1) + diphosphate. Functionally, RNA-dependent RNA polymerase, which is responsible for the replication and transcription of the viral RNA genome using antigenomic RNA as an intermediate. During transcription, synthesizes subgenomic RNAs and assures their capping by a cap-snatching mechanism, which involves the endonuclease activity cleaving the host capped pre-mRNAs. These short capped RNAs are then used as primers for viral transcription. The 3'-end of subgenomic mRNAs molecules are heterogeneous and not polyadenylated. The replicase function is to direct synthesis of antigenomic and genomic RNA which are encapsidated and non capped. As a consequence of the use of the same enzyme for both transcription and replication, these mechanisms need to be well coordinated. These processes may be regulated by proteins N and Z in a dose-dependent manner. Z protein inhibits the viral polymerase L und thus the viral transcription and RNA synthesis. This is RNA-directed RNA polymerase L from Junin mammarenavirus (JUNV).